We begin with the raw amino-acid sequence, 254 residues long: Phosphoribosylaminoimidazole-succinocarboxamide synthase (254 aa).

The protein belongs to the SAICAR synthetase family.

The catalysed reaction is 5-amino-1-(5-phospho-D-ribosyl)imidazole-4-carboxylate + L-aspartate + ATP = (2S)-2-[5-amino-1-(5-phospho-beta-D-ribosyl)imidazole-4-carboxamido]succinate + ADP + phosphate + 2 H(+). It participates in purine metabolism; IMP biosynthesis via de novo pathway; 5-amino-1-(5-phospho-D-ribosyl)imidazole-4-carboxamide from 5-amino-1-(5-phospho-D-ribosyl)imidazole-4-carboxylate: step 1/2. In Bartonella quintana (strain Toulouse) (Rochalimaea quintana), this protein is Phosphoribosylaminoimidazole-succinocarboxamide synthase.